The chain runs to 285 residues: HTH-type transcriptional regulator MurR (285 aa).

An HTH rpiR-type domain is found at 1-77 (MLYLTKISNA…MALIGEYSAS (77 aa)). Positions 37–56 (SRQMAKQLGISQSSIVKFAQ) form a DNA-binding region, H-T-H motif. Positions 128 to 268 (IIDVISKAQF…FVGLVQLNDV (141 aa)) constitute an SIS domain.

Homotetramer.

It functions in the pathway amino-sugar metabolism; N-acetylmuramate degradation [regulation]. Its function is as follows. Represses the expression of the murPQ operon involved in the uptake and degradation of N-acetylmuramic acid (MurNAc). Binds to two adjacent inverted repeats within the operator region. MurNAc 6-phosphate, the substrate of MurQ, is the specific inducer that weakens binding of MurR to the operator. This chain is HTH-type transcriptional regulator MurR, found in Escherichia coli (strain B / BL21-DE3).